Consider the following 96-residue polypeptide: Bublin coiled-coil protein (96 aa).

Residues 39-79 are a coiled coil; sequence NSCLDDIEDRNDALNGKLHELLESNRQARKDFRQQLNDEEA. The interval 63 to 96 is disordered; the sequence is NRQARKDFRQQLNDEEASPPPAEDPASRDTQTED. The span at 87 to 96 shows a compositional bias: basic and acidic residues; sequence PASRDTQTED.

The protein belongs to the UPF0184 (EST00098) family.

The protein localises to the cell junction. It localises to the cytoplasm. Its subcellular location is the cytoskeleton. Essential for intermediate filament organization in intestinal cells, interacts with intermediate filament and regulates intestinal lumen morphology. This Ctenopharyngodon idella (Grass carp) protein is Bublin coiled-coil protein (bbln).